Consider the following 1491-residue polypeptide: Chromosome partition protein MukB (1491 aa).

ATP is bound at residue 34 to 41 (GGNGAGKS). Coiled-coil stretches lie at residues 302-418 (LIEQ…QYQQ), 488-600 (EVAR…RFES), 638-666 (ELEKAQSMAKDKLAERRAKLDSEIERLAS), 781-806 (RAAREQRLELLREERDDVVEQHAKAS), 836-1109 (EQAL…DLRT), and 1210-1239 (VEAIEEMEVELARLTEELTQREQRLAISSD). Residues 667 to 784 (PGGSNDPRLK…AIPLFGRAAR (118 aa)) are flexible hinge. Residues 1059–1080 (QRRRDELQERLHTSRSRKSEYE) form a disordered region.

The protein belongs to the SMC family. MukB subfamily. In terms of assembly, homodimerization via its hinge domain. Binds to DNA via its C-terminal region. Interacts, and probably forms a ternary complex, with MukE and MukF via its C-terminal region. The complex formation is stimulated by calcium or magnesium. Interacts with tubulin-related protein FtsZ.

Its subcellular location is the cytoplasm. It is found in the nucleoid. Its function is as follows. Plays a central role in chromosome condensation, segregation and cell cycle progression. Functions as a homodimer, which is essential for chromosome partition. Involved in negative DNA supercoiling in vivo, and by this means organize and compact chromosomes. May achieve or facilitate chromosome segregation by condensation DNA from both sides of a centrally located replisome during cell division. The polypeptide is Chromosome partition protein MukB (Vibrio cholerae serotype O1 (strain ATCC 39541 / Classical Ogawa 395 / O395)).